Consider the following 289-residue polypeptide: RNA exonuclease 4 (289 aa).

A compositionally biased stretch (polar residues) spans Met1–Lys24. The disordered stretch occupies residues Met1–Lys34. Residues Gln25–Lys34 show a composition bias toward basic residues. Residues Tyr121 to Tyr273 enclose the Exonuclease domain.

Belongs to the REXO4 family.

It localises to the nucleus. In terms of biological role, exoribonuclease involved in ribosome biosynthesis. Involved in the processing of ITS1, the internal transcribed spacer localized between the 18S and 5.8S rRNAs. The polypeptide is RNA exonuclease 4 (REX4) (Saccharomyces cerevisiae (strain ATCC 204508 / S288c) (Baker's yeast)).